Here is a 216-residue protein sequence, read N- to C-terminus: Ribosomal RNA small subunit methyltransferase G (216 aa).

S-adenosyl-L-methionine is bound by residues glycine 82, leucine 87, 135 to 136 (AE), and arginine 148.

This sequence belongs to the methyltransferase superfamily. RNA methyltransferase RsmG family.

It is found in the cytoplasm. The enzyme catalyses guanosine(527) in 16S rRNA + S-adenosyl-L-methionine = N(7)-methylguanosine(527) in 16S rRNA + S-adenosyl-L-homocysteine. In terms of biological role, specifically methylates the N7 position of guanine in position 527 of 16S rRNA. This Caulobacter vibrioides (strain ATCC 19089 / CIP 103742 / CB 15) (Caulobacter crescentus) protein is Ribosomal RNA small subunit methyltransferase G.